The chain runs to 395 residues: ATP phosphoribosyltransferase regulatory subunit (395 aa).

This sequence belongs to the class-II aminoacyl-tRNA synthetase family. HisZ subfamily. As to quaternary structure, heteromultimer composed of HisG and HisZ subunits.

It is found in the cytoplasm. It participates in amino-acid biosynthesis; L-histidine biosynthesis; L-histidine from 5-phospho-alpha-D-ribose 1-diphosphate: step 1/9. Its function is as follows. Required for the first step of histidine biosynthesis. May allow the feedback regulation of ATP phosphoribosyltransferase activity by histidine. In Thioalkalivibrio sulfidiphilus (strain HL-EbGR7), this protein is ATP phosphoribosyltransferase regulatory subunit.